A 385-amino-acid polypeptide reads, in one-letter code: Xanthosine methyltransferase 2 (385 aa).

Tyr18 contacts S-adenosyl-L-homocysteine. The xanthosine site is built by Asn21 and Asn25. 7 residues coordinate S-adenosyl-L-homocysteine: Cys62, Asn67, Asp101, Leu102, Ser140, Phe141, and Cys157. A xanthosine-binding site is contributed by Tyr158. Cys159 contacts S-adenosyl-L-homocysteine. The xanthosine site is built by His161 and Trp162. The Mg(2+) site is built by Asn179, Asp261, Phe263, and Asn264. The xanthosine site is built by Ser329, Tyr334, and Tyr369.

It belongs to the methyltransferase superfamily. Type-7 methyltransferase family. Mg(2+) is required as a cofactor. Expressed at low levels in young leaves but not in mature leaves. Barely detectable in fruits (grains).

The catalysed reaction is xanthosine + S-adenosyl-L-methionine = 7-methylxanthosine + S-adenosyl-L-homocysteine. It participates in alkaloid biosynthesis. Its function is as follows. Involved in the biosynthesis of caffeine. Specific for xanthosine and could not use xanthosine 5'-monophosphate (XMP) as substrate. Catalyzes the 7-N-methylation activity of xanthosine, but does not have 1-N- or 3-N-methylation activity. The polypeptide is Xanthosine methyltransferase 2 (Coffea arabica (Arabian coffee)).